A 156-amino-acid polypeptide reads, in one-letter code: UPF0262 protein Jann_2882 (156 aa).

It belongs to the UPF0262 family.

This Jannaschia sp. (strain CCS1) protein is UPF0262 protein Jann_2882.